Consider the following 82-residue polypeptide: U-actitoxin-Oulsp2 (82 aa).

Residues 1 to 21 (MNTKLVVVFLLSAILFVSVTA) form the signal peptide. A propeptide spanning residues 22–46 (SRPGKDLERDEAYETYDDERPYFKR) is cleaved from the precursor. Residues 48-82 (CKDNLPAATCSNVKANNNCSSEKYKTNCAKTCGEC) form the ShKT domain. 3 disulfide bridges follow: C48–C82, C57–C75, and C66–C79. Residues 70–71 (KY) are theoritically crucial for binding to potassium channels.

Belongs to the sea anemone type 1 potassium channel toxin family. Type 1b subfamily.

Its subcellular location is the secreted. The protein localises to the nematocyst. Functionally, probable toxin with unknown function. In contrast to similar toxins, this toxin does not inhibit voltage-gated potassium channels (tested at 100 nM). Does not show antimicrobial activities against bacteria and yeasts. The protein is U-actitoxin-Oulsp2 of Oulactis sp. (Sea anemone).